A 178-amino-acid chain; its full sequence is ATP-dependent protease subunit HslV (178 aa).

T7 is an active-site residue. Na(+) contacts are provided by G162, C165, and T168.

This sequence belongs to the peptidase T1B family. HslV subfamily. A double ring-shaped homohexamer of HslV is capped on each side by a ring-shaped HslU homohexamer. The assembly of the HslU/HslV complex is dependent on binding of ATP.

Its subcellular location is the cytoplasm. It catalyses the reaction ATP-dependent cleavage of peptide bonds with broad specificity.. With respect to regulation, allosterically activated by HslU binding. In terms of biological role, protease subunit of a proteasome-like degradation complex believed to be a general protein degrading machinery. In Sulfurihydrogenibium sp. (strain YO3AOP1), this protein is ATP-dependent protease subunit HslV.